A 178-amino-acid polypeptide reads, in one-letter code: Interleukin-1 receptor antagonist protein (178 aa).

The signal sequence occupies residues Met1 to Cys26. A disulfide bridge links Cys92 with Cys142. An N-linked (GlcNAc...) asparagine glycan is attached at Asn110.

Belongs to the IL-1 family.

The protein localises to the secreted. It localises to the cytoplasm. Anti-inflammatory antagonist of interleukin-1 family of proinflammatory cytokines such as interleukin-1beta/IL1B and interleukin-1alpha/IL1A. Protects from immune dysregulation and uncontrolled systemic inflammation triggered by IL1 for a range of innate stimulatory agents such as pathogens. The chain is Interleukin-1 receptor antagonist protein (Il1rn) from Mus musculus (Mouse).